The primary structure comprises 508 residues: DNA polymerase II small subunit (508 aa).

Residues 66–80 (ASSAAQTSAPASTPP) show a composition bias toward low complexity. The segment at 66–122 (ASSAAQTSAPASTPPDEATTHTDPSATDTPPNHDGGRAATADARSVEIDGDMTGAST) is disordered. The span at 86–95 (HTDPSATDTP) shows a compositional bias: polar residues.

The protein belongs to the DNA polymerase delta/II small subunit family. As to quaternary structure, heterodimer of a large subunit and a small subunit.

The catalysed reaction is DNA(n) + a 2'-deoxyribonucleoside 5'-triphosphate = DNA(n+1) + diphosphate. It carries out the reaction Exonucleolytic cleavage in the 3'- to 5'-direction to yield nucleoside 5'-phosphates.. Its function is as follows. Possesses two activities: a DNA synthesis (polymerase) and an exonucleolytic activity that degrades single-stranded DNA in the 3' to 5' direction. Has a template-primer preference which is characteristic of a replicative DNA polymerase. The protein is DNA polymerase II small subunit of Halobacterium salinarum (strain ATCC 29341 / DSM 671 / R1).